The following is a 272-amino-acid chain: Phosphoglycolate phosphatase (272 aa).

The active-site Nucleophile is the Asp19. 3 residues coordinate Mg(2+): Asp19, Asp21, and Asp182.

The protein belongs to the HAD-like hydrolase superfamily. CbbY/CbbZ/Gph/YieH family. Mg(2+) is required as a cofactor.

It carries out the reaction 2-phosphoglycolate + H2O = glycolate + phosphate. It functions in the pathway organic acid metabolism; glycolate biosynthesis; glycolate from 2-phosphoglycolate: step 1/1. Specifically catalyzes the dephosphorylation of 2-phosphoglycolate. Is involved in the dissimilation of the intracellular 2-phosphoglycolate formed during the DNA repair of 3'-phosphoglycolate ends, a major class of DNA lesions induced by oxidative stress. The chain is Phosphoglycolate phosphatase from Pseudomonas putida (strain ATCC 47054 / DSM 6125 / CFBP 8728 / NCIMB 11950 / KT2440).